A 785-amino-acid polypeptide reads, in one-letter code: Endonuclease MutS2 (785 aa).

332–339 (GPNTGGKT) is a binding site for ATP. The Smr domain maps to 710 to 785 (IDLRGLDAEE…GDGATIVELK (76 aa)).

Belongs to the DNA mismatch repair MutS family. MutS2 subfamily. Homodimer. Binds to stalled ribosomes, contacting rRNA.

In terms of biological role, endonuclease that is involved in the suppression of homologous recombination and thus may have a key role in the control of bacterial genetic diversity. Its function is as follows. Acts as a ribosome collision sensor, splitting the ribosome into its 2 subunits. Detects stalled/collided 70S ribosomes which it binds and splits by an ATP-hydrolysis driven conformational change. Acts upstream of the ribosome quality control system (RQC), a ribosome-associated complex that mediates the extraction of incompletely synthesized nascent chains from stalled ribosomes and their subsequent degradation. Probably generates substrates for RQC. The polypeptide is Endonuclease MutS2 (Clostridium botulinum (strain Alaska E43 / Type E3)).